The following is a 75-amino-acid chain: U14-hexatoxin-Mg1a (75 aa).

The first 19 residues, 1-19 (MKLTLFILIVFVVLANVYA), serve as a signal peptide directing secretion. Positions 20–31 (AGISERNIIGGR) are excised as a propeptide.

Post-translationally, contains 4 disulfide bonds. In terms of tissue distribution, expressed by the venom gland.

Its subcellular location is the secreted. No toxicity is observed upon intracranial injection into mice and intrathorax injection into crickets. In Macrothele gigas (Japanese funnel web spider), this protein is U14-hexatoxin-Mg1a.